The chain runs to 424 residues: UPF0761 membrane protein Smal_0716 (424 aa).

6 helical membrane-spanning segments follow: residues 48–68 (VFAL…FPVF), 101–121 (SAGQ…LITL), 144–164 (FLVY…SLAV), 181–201 (WLAD…CITL), 216–236 (AVPG…GIGA), and 251–271 (VAFV…VLLG).

It belongs to the UPF0761 family.

The protein localises to the cell inner membrane. The polypeptide is UPF0761 membrane protein Smal_0716 (Stenotrophomonas maltophilia (strain R551-3)).